A 745-amino-acid polypeptide reads, in one-letter code: Serine/threonine-protein kinase GG21441 (745 aa).

Residues 49–73 (RNQQQNVQKDFDSHNRDCDSPVSST) form a disordered region. Basic and acidic residues predominate over residues 57–67 (KDFDSHNRDCD). Doublecortin domains lie at 159–245 (LRIK…VEYN) and 315–398 (RIVT…AEDF). Residues 479–737 (YTLGRIIGDG…SEDILDHYWT (259 aa)) enclose the Protein kinase domain. ATP contacts are provided by residues 485–493 (IGDGNFAIV) and Lys-508. Residue Asp-600 is the Proton acceptor of the active site.

This sequence belongs to the protein kinase superfamily. CAMK Ser/Thr protein kinase family. CaMK subfamily.

The enzyme catalyses L-seryl-[protein] + ATP = O-phospho-L-seryl-[protein] + ADP + H(+). The catalysed reaction is L-threonyl-[protein] + ATP = O-phospho-L-threonyl-[protein] + ADP + H(+). The polypeptide is Serine/threonine-protein kinase GG21441 (Drosophila erecta (Fruit fly)).